We begin with the raw amino-acid sequence, 186 residues long: PRKR-interacting protein 1 (186 aa).

The segment at 1–50 is interaction with EIF2AK2; it reads MASPAAASVRPPRPKKEPQTLVIPKNAAEEQKLKLERLMKNPDKAVPIPE. The interval 51-143 is required for RNA-binding; the sequence is KMNEWAPRAP…LKEKKLLAKK (93 aa). The stretch at 91–178 forms a coiled coil; sequence QRQDYMDAMA…ASETEEEEEE (88 aa). The span at 116 to 125 shows a compositional bias: basic and acidic residues; that stretch reads NKIAAEEQTA. The interval 116–186 is disordered; the sequence is NKIAAEEQTA…EEPSVVIMGR (71 aa). The segment at 126-138 is required for nuclear localization; it reads KRRKKRQKLKEKK. The segment covering 126 to 143 has biased composition (basic residues); sequence KRRKKRQKLKEKKLLAKK. Basic and acidic residues predominate over residues 144 to 155; sequence MKLEQKKQKEEP. The span at 168–179 shows a compositional bias: acidic residues; it reads EASETEEEEEEP.

It belongs to the PRKRIP1 family. In terms of assembly, component of the pre-catalytic and post-catalytic spliceosome complexes. Interacts with EIF2AK2. As to expression, broadly expressed, with highest levels in liver, kidney, brain and heart.

The protein resides in the nucleus. It localises to the nucleolus. Functionally, required for pre-mRNA splicing as component of the spliceosome. Binds double-stranded RNA. Inhibits EIF2AK2 kinase activity. This is PRKR-interacting protein 1 (Prkrip1) from Mus musculus (Mouse).